A 654-amino-acid chain; its full sequence is Translation factor GUF1, mitochondrial (654 aa).

The tr-type G domain maps to 57–237; sequence ENYRNFSIVA…SVIKNIPSPV (181 aa). GTP contacts are provided by residues 66 to 73, 130 to 134, and 184 to 187; these read AHVDHGKS, DTPGH, and NKID.

It belongs to the TRAFAC class translation factor GTPase superfamily. Classic translation factor GTPase family. LepA subfamily.

Its subcellular location is the mitochondrion inner membrane. It catalyses the reaction GTP + H2O = GDP + phosphate + H(+). In terms of biological role, promotes mitochondrial protein synthesis. May act as a fidelity factor of the translation reaction, by catalyzing a one-codon backward translocation of tRNAs on improperly translocated ribosomes. Binds to mitochondrial ribosomes in a GTP-dependent manner. This chain is Translation factor GUF1, mitochondrial, found in Candida albicans (strain WO-1) (Yeast).